Consider the following 469-residue polypeptide: NADH-quinone oxidoreductase subunit N (469 aa).

Helical transmembrane passes span 9 to 29 (PLLM…LIAG), 40 to 60 (VGVM…VQMV), 76 to 96 (ATGV…AVAG), 105 to 125 (EAET…LAGA), 128 to 148 (LLLL…LVGL), 162 to 182 (YLMG…LYGL), 201 to 221 (VAVA…AGGV), 234 to 254 (ANAT…LVAL), 265 to 285 (LAWP…GNLA), 294 to 316 (RLLG…VAGA), 327 to 347 (YLGG…ALPG), 365 to 385 (AAAL…AVFI), 402 to 422 (LAVV…RWII), and 448 to 468 (VLAA…WQLV).

The protein belongs to the complex I subunit 2 family. NDH-1 is composed of 14 different subunits. Subunits NuoA, H, J, K, L, M, N constitute the membrane sector of the complex.

The protein localises to the cell membrane. It catalyses the reaction a quinone + NADH + 5 H(+)(in) = a quinol + NAD(+) + 4 H(+)(out). In terms of biological role, NDH-1 shuttles electrons from NADH, via FMN and iron-sulfur (Fe-S) centers, to quinones in the respiratory chain. The immediate electron acceptor for the enzyme in this species is believed to be a menaquinone. Couples the redox reaction to proton translocation (for every two electrons transferred, four hydrogen ions are translocated across the cytoplasmic membrane), and thus conserves the redox energy in a proton gradient. The sequence is that of NADH-quinone oxidoreductase subunit N from Mycobacterium sp. (strain JLS).